Here is a 369-residue protein sequence, read N- to C-terminus: Ubiquinone biosynthesis protein COQ4, mitochondrial (369 aa).

A mitochondrion-targeting transit peptide spans 1–35; it reads MLTSQKVSRVLLHSSFLKTPVSTQSRSFVFTTIAT. The Zn(2+) site is built by histidine 212, aspartate 213, histidine 216, and glutamate 228. Residues 329–360 are compositionally biased toward low complexity; the sequence is AAAAATVTQRQRQQQRATATAANATSASSANV. A disordered region spans residues 329–369; that stretch reads AAAAATVTQRQRQQQRATATAANATSASSANVKPSNTAGAM.

This sequence belongs to the COQ4 family. In terms of assembly, component of a multi-subunit COQ enzyme complex, composed of at least COQ3, COQ4, COQ5, COQ6, COQ7 and COQ9. Zn(2+) is required as a cofactor.

The protein localises to the mitochondrion inner membrane. The enzyme catalyses a 4-hydroxy-3-methoxy-5-(all-trans-polyprenyl)benzoate + H(+) = a 2-methoxy-6-(all-trans-polyprenyl)phenol + CO2. Its pathway is cofactor biosynthesis; ubiquinone biosynthesis. Its function is as follows. Lyase that catalyzes the C1-decarboxylation of 4-hydroxy-3-methoxy-5-(all-trans-polyprenyl)benzoic acid into 2-methoxy-6-(all-trans-polyprenyl)phenol during ubiquinone biosynthesis. This chain is Ubiquinone biosynthesis protein COQ4, mitochondrial, found in Lodderomyces elongisporus (strain ATCC 11503 / CBS 2605 / JCM 1781 / NBRC 1676 / NRRL YB-4239) (Yeast).